The following is a 498-amino-acid chain: Thiamine transporter 1 (498 aa).

Position 1 is an N-acetylmethionine (Met-1). Over 1 to 28 the chain is Cytoplasmic; sequence MDVPARVSRRAAAAAARMLLRTARVPRE. The chain crosses the membrane as a helical span at residues 29–46; the sequence is CWFLPTALLCAYGFFANL. Topologically, residues 47–71 are extracellular; it reads RPSEPFLTPYLLGPDKNLTERQVYN. A glycan (N-linked (GlcNAc...) asparagine) is linked at Asn-63. The helical transmembrane segment at 72–92 threads the bilayer; that stretch reads EIYPVWTYSYLLLLFPVFLAT. The Cytoplasmic portion of the chain corresponds to 93–105; the sequence is DYLRYKPVILLQG. Residues 106-126 traverse the membrane as a helical segment; that stretch reads LSLIVTWFMLLYAQGLLAIQF. The Extracellular segment spans residues 127 to 128; sequence LE. The chain crosses the membrane as a helical span at residues 129–149; that stretch reads FFYGIATATEIAYYSYIYTVV. Over 150–164 the chain is Cytoplasmic; the sequence is DLGMYQKVTSYCRSA. The chain crosses the membrane as a helical span at residues 165-185; that stretch reads TLVGFTVGSVLGQILVSVVGW. Residue Ser-186 is a topological domain, extracellular. The chain crosses the membrane as a helical span at residues 187 to 207; that stretch reads LFSLNVISLTCVSVAFAVAWF. Topologically, residues 208-295 are cytoplasmic; it reads LPMPQKSLFF…DFLMCYSSRP (88 aa). Ser-222 bears the Phosphoserine mark. The chain crosses the membrane as a helical span at residues 296–316; that stretch reads LLCWSVWWALSTCGYFQVVNY. The Extracellular portion of the chain corresponds to 317-334; it reads AQGLWEKVMPSQNADIYN. The chain crosses the membrane as a helical span at residues 335 to 355; the sequence is GGVEAVSTLLGASAVFAVGYI. At 356–360 the chain is on the cytoplasmic side; sequence KLSWS. Residues 361–381 traverse the membrane as a helical segment; the sequence is TWGEMTLFLCSLLIAAAVYVM. The Extracellular portion of the chain corresponds to 382-386; it reads DTVQS. Residues 387 to 407 form a helical membrane-spanning segment; that stretch reads IWVCYASYVVFRIIYMVLITI. Residues 408–423 lie on the Cytoplasmic side of the membrane; that stretch reads ATFQIAANLSMERYAL. A helical membrane pass occupies residues 424–444; the sequence is VFGVNTFIALALQTLLTLIVV. Residues 445–456 lie on the Extracellular side of the membrane; it reads DARGLGLCITTQ. A helical transmembrane segment spans residues 457-477; that stretch reads FLIYASYFAAISVVFLANGIV. At 478 to 498 the chain is on the cytoplasmic side; the sequence is SIIKKCRKQEDPSSSPQASTS.

This sequence belongs to the reduced folate carrier (RFC) transporter (TC 2.A.48) family. As to quaternary structure, interacts with TSPAN1; this interaction increases the stability of SLC19A2. Interacts with TMEM63B. In terms of tissue distribution, expressed in liver. Expressed in cochlear hair cells and duodenum (at protein level). Detected in pancreatic acinar cells (at protein level). Also expressed strongly in pancreatic islet cells. Expressed in the testis. As to expression, very highly expressed in liver, and also detected at lower levels in heart, testis, kidney, brain and spleen. Expressed at low levels in liver and spleen.

The protein localises to the cell membrane. It carries out the reaction thiamine(out) + H(+)(in) = thiamine(in) + H(+)(out). The catalysed reaction is pyridoxine(out) + n H(+)(out) = pyridoxine(in) + n H(+)(in). Its function is as follows. High-affinity transporter for the intake of thiamine. Essential for spermatogenesis. Mediates H(+)-dependent pyridoxine transport. In Mus musculus (Mouse), this protein is Thiamine transporter 1.